The sequence spans 378 residues: MSTMSDLFPDLVEEILSRVPITSLKAVKLTCKQWNDLSKDSSFTKNHYGKEAKEIQVIMICDLKACLMSVNLHNHKDLADPSIKQIGKLNQVEIDSVFHCDGLLLLLLCNPKDNSKLMVWNPYLGQTRWIQPRNNSHKHRPAGRFNHRPAGRFYMGYDSNNNHKILWFSSMYREYEIYDFKSDAWTVIDVNTDQDHIIDNQRVSLKGNVYFIAHDILKEEAFLLSFDFTCERFGPSLPLPFHCCHEDTVLLSTVREEQLAVLFQKSDAYEMGIWITTKIELNIVLWSKFLKVDMTLPNSYWFEDLSFFLVDEKKKVAMVSELDIETCKNYKTYILGENGYYREVDLRKSKGCVYLCVLMFQVWCKSSKVPVLARCERK.

The F-box domain occupies 1-47; sequence MSTMSDLFPDLVEEILSRVPITSLKAVKLTCKQWNDLSKDSSFTKNH.

The protein is Putative F-box protein At5g51000 of Arabidopsis thaliana (Mouse-ear cress).